Reading from the N-terminus, the 154-residue chain is Large ribosomal subunit protein uL22c (154 aa).

The protein belongs to the universal ribosomal protein uL22 family. Part of the 50S ribosomal subunit.

Its subcellular location is the plastid. The protein localises to the chloroplast. In terms of biological role, this protein binds specifically to 23S rRNA. Functionally, the globular domain of the protein is located near the polypeptide exit tunnel on the outside of the subunit, while an extended beta-hairpin is found that lines the wall of the exit tunnel in the center of the 70S ribosome. The protein is Large ribosomal subunit protein uL22c (rpl22) of Jasminum nudiflorum (Winter jasmine).